We begin with the raw amino-acid sequence, 221 residues long: Toxin coregulated pilus biosynthesis protein P (221 aa).

Positions 5–109 (RVIYQFPDNL…VKLQGYRINI (105 aa)) form a DNA-binding region, ompR/PhoB-type. The helical transmembrane segment at 143–163 (VVPYLVFSALYVALLPVIWWS) threads the bilayer.

It is found in the cell membrane. In terms of biological role, involved in TCP pilus biogenesis. This is Toxin coregulated pilus biosynthesis protein P (tcpP) from Vibrio cholerae serotype O1 (strain ATCC 39315 / El Tor Inaba N16961).